The sequence spans 316 residues: Thymidylate synthase (316 aa).

Residues Arg-23 and 178-179 contribute to the dUMP site; that span reads RR. Cys-198 serves as the catalytic Nucleophile. DUMP contacts are provided by residues 218–221, Asn-229, and 259–261; these read RSAD and HLY. Residue Asp-221 participates in (6R)-5,10-methylene-5,6,7,8-tetrahydrofolate binding. Ala-315 serves as a coordination point for (6R)-5,10-methylene-5,6,7,8-tetrahydrofolate.

This sequence belongs to the thymidylate synthase family. Bacterial-type ThyA subfamily. As to quaternary structure, homodimer.

Its subcellular location is the cytoplasm. The catalysed reaction is dUMP + (6R)-5,10-methylene-5,6,7,8-tetrahydrofolate = 7,8-dihydrofolate + dTMP. It participates in pyrimidine metabolism; dTTP biosynthesis. Its function is as follows. Catalyzes the reductive methylation of 2'-deoxyuridine-5'-monophosphate (dUMP) to 2'-deoxythymidine-5'-monophosphate (dTMP) while utilizing 5,10-methylenetetrahydrofolate (mTHF) as the methyl donor and reductant in the reaction, yielding dihydrofolate (DHF) as a by-product. This enzymatic reaction provides an intracellular de novo source of dTMP, an essential precursor for DNA biosynthesis. This is Thymidylate synthase from Lacticaseibacillus paracasei (strain ATCC 334 / BCRC 17002 / CCUG 31169 / CIP 107868 / KCTC 3260 / NRRL B-441) (Lactobacillus paracasei).